The primary structure comprises 1023 residues: Probable histidine kinase 3 (1023 aa).

Residues 1–80 (MDEMSCGGGG…RGWRVVRETW (80 aa)) lie on the Cytoplasmic side of the membrane. A helical transmembrane segment spans residues 81–101 (WWVLLLWILAGSLGSFYLFLF). The Extracellular segment spans residues 102–387 (MNAQSLDKRR…CRFEKKPPWP (286 aa)). Residues 151–352 (TPSAIDQMTF…TNESPISMYG (202 aa)) enclose the CHASE domain. The helical transmembrane segment at 388-408 (WLAITSSFGTLVIALLTGHIF) threads the bilayer. At 409 to 1023 (QATVHRIAKV…RFFQNHDQVE (615 aa)) the chain is on the cytoplasmic side. Residues 445–715 (TVSHEIRTPM…TFTFTAVLMR (271 aa)) enclose the Histidine kinase domain. H448 is subject to Phosphohistidine; by autocatalysis. 2 consecutive Response regulatory domains span residues 732-854 (NALV…RRAL) and 880-1016 (QIIV…ARFF). D783 is subject to 4-aspartylphosphate. Residues 812 to 831 (LFLLGSSASSPKGGSDTSRE) are disordered. Residues 817 to 827 (SSASSPKGGSD) are compositionally biased toward polar residues. D930 bears the 4-aspartylphosphate mark.

Activation probably requires a transfer of a phosphate group between a His in the transmitter domain and an Asp of the receiver domain.

Its subcellular location is the cell membrane. It catalyses the reaction ATP + protein L-histidine = ADP + protein N-phospho-L-histidine.. Functionally, cytokinin receptor related to bacterial two-component regulators. Functions as a histidine kinase and transmits the stress signal to a downstream MAPK cascade. The sequence is that of Probable histidine kinase 3 from Oryza sativa subsp. indica (Rice).